The primary structure comprises 381 residues: 1-deoxy-D-xylulose 5-phosphate reductoisomerase (381 aa).

NADPH-binding residues include threonine 11, glycine 12, serine 13, isoleucine 14, asparagine 37, and asparagine 121. Residue lysine 122 coordinates 1-deoxy-D-xylulose 5-phosphate. Glutamate 123 serves as a coordination point for NADPH. Residue aspartate 147 participates in Mn(2+) binding. 1-deoxy-D-xylulose 5-phosphate-binding residues include serine 148, glutamate 149, serine 173, and histidine 196. Glutamate 149 serves as a coordination point for Mn(2+). Glycine 202 serves as a coordination point for NADPH. The 1-deoxy-D-xylulose 5-phosphate site is built by serine 209, asparagine 214, lysine 215, and glutamate 218. Glutamate 218 serves as a coordination point for Mn(2+).

It belongs to the DXR family. Mg(2+) is required as a cofactor. It depends on Mn(2+) as a cofactor.

It carries out the reaction 2-C-methyl-D-erythritol 4-phosphate + NADP(+) = 1-deoxy-D-xylulose 5-phosphate + NADPH + H(+). The protein operates within isoprenoid biosynthesis; isopentenyl diphosphate biosynthesis via DXP pathway; isopentenyl diphosphate from 1-deoxy-D-xylulose 5-phosphate: step 1/6. Catalyzes the NADPH-dependent rearrangement and reduction of 1-deoxy-D-xylulose-5-phosphate (DXP) to 2-C-methyl-D-erythritol 4-phosphate (MEP). In Ruminiclostridium cellulolyticum (strain ATCC 35319 / DSM 5812 / JCM 6584 / H10) (Clostridium cellulolyticum), this protein is 1-deoxy-D-xylulose 5-phosphate reductoisomerase.